Reading from the N-terminus, the 181-residue chain is Peptidyl-tRNA hydrolase (181 aa).

Tyr14 provides a ligand contact to tRNA. The active-site Proton acceptor is His19. Positions 61, 63, and 107 each coordinate tRNA.

The protein belongs to the PTH family. Monomer.

The protein resides in the cytoplasm. It carries out the reaction an N-acyl-L-alpha-aminoacyl-tRNA + H2O = an N-acyl-L-amino acid + a tRNA + H(+). Hydrolyzes ribosome-free peptidyl-tRNAs (with 1 or more amino acids incorporated), which drop off the ribosome during protein synthesis, or as a result of ribosome stalling. Functionally, catalyzes the release of premature peptidyl moieties from peptidyl-tRNA molecules trapped in stalled 50S ribosomal subunits, and thus maintains levels of free tRNAs and 50S ribosomes. The sequence is that of Peptidyl-tRNA hydrolase from Campylobacter fetus subsp. fetus (strain 82-40).